The primary structure comprises 575 residues: Suppressor of tumorigenicity 7 protein-like (575 aa).

2 helical membrane-spanning segments follow: residues glycine 36 to leucine 56 and phenylalanine 80 to tryptophan 100. The interval glycine 125–glutamine 147 is disordered. Over residues threonine 126–serine 137 the composition is skewed to polar residues.

The protein belongs to the ST7 family.

The protein resides in the membrane. This Homo sapiens (Human) protein is Suppressor of tumorigenicity 7 protein-like (ST7L).